The chain runs to 212 residues: Thymidylate kinase (212 aa).

13 to 20 is an ATP binding site; sequence GLEGAGKS.

It belongs to the thymidylate kinase family.

The enzyme catalyses dTMP + ATP = dTDP + ADP. Phosphorylation of dTMP to form dTDP in both de novo and salvage pathways of dTTP synthesis. The sequence is that of Thymidylate kinase from Legionella pneumophila (strain Paris).